A 220-amino-acid polypeptide reads, in one-letter code: Elongation factor Ts (220 aa).

The tract at residues Thr-83–Val-86 is involved in Mg(2+) ion dislocation from EF-Tu.

The protein belongs to the EF-Ts family.

The protein resides in the cytoplasm. Its function is as follows. Associates with the EF-Tu.GDP complex and induces the exchange of GDP to GTP. It remains bound to the aminoacyl-tRNA.EF-Tu.GTP complex up to the GTP hydrolysis stage on the ribosome. The polypeptide is Elongation factor Ts (Synechococcus sp. (strain CC9605)).